The sequence spans 1647 residues: Putative RNA exonuclease pqe-1 (1647 aa).

4 disordered regions span residues 1 to 199 (MFNG…QVQN), 274 to 393 (QTPA…TSLP), 515 to 619 (MMQQ…KPVI), and 641 to 665 (QVKQ…PTAR). 2 stretches are compositionally biased toward low complexity: residues 30–64 (GPSQ…SGAS) and 99–131 (TQPQ…AAAA). Over residues 143–170 (SREQGNAHQPTAGQIPQSSNQPAQQTHN) the composition is skewed to polar residues. Composition is skewed to low complexity over residues 274–297 (QTPA…NPQQ) and 515–526 (MMQQQAMQMQMQ). The segment covering 527-540 (NPPPVHQQPPPQQP) has biased composition (pro residues). A compositionally biased stretch (low complexity) spans 541 to 555 (PQQQRQKQQRSQPAP). Positions 592-601 (SKIEPVDVKP) are enriched in basic and acidic residues. Low complexity predominate over residues 650-664 (SSTSDATKSDAAPTA). Residues 686–726 (SAKKFERMKAEAEDKEDMKKKIAALQEALFNIQEERRVEKE) are a coiled coil. The span at 736-756 (AVPQNQPASSVQIAQVSTSES) shows a compositional bias: polar residues. Residues 736 to 1174 (AVPQNQPASS…LRNKKHTTEE (439 aa)) are disordered. The segment covering 761–772 (TSEAAATETMTS) has biased composition (low complexity). Residues 783 to 793 (TEGEQEEDEDE) show a composition bias toward acidic residues. Basic and acidic residues predominate over residues 822 to 833 (RSDEKREKRHVS). A compositionally biased stretch (acidic residues) spans 878–905 (DNEDDDADSFVVGDDEPIEYEEEDEDDM). Positions 977–992 (TPTASSSMSSSTLSYC) are enriched in low complexity. Residues 1018–1031 (KTREENRERKRLAQ) are compositionally biased toward basic and acidic residues. Residues 1038–1054 (SETTGVRRTLRSTQDNS) show a composition bias toward polar residues. 2 stretches are compositionally biased toward basic and acidic residues: residues 1076-1088 (AKSS…EKQK) and 1139-1174 (NHTE…TTEE). The stretch at 1142–1187 (EMLDKRNKESEEKRRKDRDELERLRNKKHTTEEEKIKMARLQNALK) forms a coiled coil. The Exonuclease domain occupies 1477-1637 (RVYALDCEMV…IFYGLRNPES (161 aa)).

It belongs to the REXO1/REXO3 family. Expressed in the excretory canal, vulval cells, the intestine and in head and tail neurons including ASH, RIC and AIZ neurons.

The protein localises to the nucleus. Putative RNA exonuclease which protects neurons from the toxic effects of expanded poly-Q disease proteins. It is unknown whether this is via participation in the pathogenic mechanism underlying poly-Q-induced neurodegeneration or if it is by acting as a genetic modifier of the age of onset or progression of neurodegeneration. Regulates gene expression in neurons. This Caenorhabditis elegans protein is Putative RNA exonuclease pqe-1.